A 503-amino-acid chain; its full sequence is ATP synthase subunit alpha (503 aa).

An ATP-binding site is contributed by 170 to 177 (GDRQTGKT).

It belongs to the ATPase alpha/beta chains family. F-type ATPases have 2 components, CF(1) - the catalytic core - and CF(0) - the membrane proton channel. CF(1) has five subunits: alpha(3), beta(3), gamma(1), delta(1), epsilon(1). CF(0) has three main subunits: a(1), b(2) and c(9-12). The alpha and beta chains form an alternating ring which encloses part of the gamma chain. CF(1) is attached to CF(0) by a central stalk formed by the gamma and epsilon chains, while a peripheral stalk is formed by the delta and b chains.

The protein resides in the cell inner membrane. It carries out the reaction ATP + H2O + 4 H(+)(in) = ADP + phosphate + 5 H(+)(out). Functionally, produces ATP from ADP in the presence of a proton gradient across the membrane. The alpha chain is a regulatory subunit. The sequence is that of ATP synthase subunit alpha from Thermotoga maritima (strain ATCC 43589 / DSM 3109 / JCM 10099 / NBRC 100826 / MSB8).